We begin with the raw amino-acid sequence, 236 residues long: DNA repair and recombination protein RadB (236 aa).

Belongs to the eukaryotic RecA-like protein family. RadB subfamily.

Functionally, involved in DNA repair and in homologous recombination. May regulate the cleavage reactions of the branch-structured DNA. Has a very weak ATPase activity that is not stimulated by DNA. Binds DNA but does not promote DNA strands exchange. This Halobacterium salinarum (strain ATCC 29341 / DSM 671 / R1) protein is DNA repair and recombination protein RadB.